Consider the following 249-residue polypeptide: Proteasome activator complex subunit 1 (249 aa).

The tract at residues 60–101 (PLDIPVPDPVKEKEKGERKKQQEKEDKDEKKKGEDEDKGPPC) is disordered. Basic and acidic residues predominate over residues 68-98 (PVKEKEKGERKKQQEKEDKDEKKKGEDEDKG).

This sequence belongs to the PA28 family. In terms of assembly, heterodimer of PSME1 and PSME2, which forms a hexameric ring. PSME1 can form homoheptamers.

Implicated in immunoproteasome assembly and required for efficient antigen processing. The PA28 activator complex enhances the generation of class I binding peptides by altering the cleavage pattern of the proteasome. The protein is Proteasome activator complex subunit 1 (PSME1) of Macaca fascicularis (Crab-eating macaque).